We begin with the raw amino-acid sequence, 820 residues long: MSAPSEEEEYARLVMEAQPEWLRAEVKRLSHELAETTREKIQAAEYGLAVLEEKHQLKLQFEELEVDYEAIRSEMEQLKEAFGQAHTNHKKVAADGESREESLIQESASKEQYYVRKVLELQTELKQLRNVLTNTQSENERLTSVAQELKEINQNVEIQRGRLRDDIKEYKFREARLLQDYSELEEENISLQKQVSVLRQNQVEFEGLKHEIKRLEEETEYLNSQLEDAIRLKEISERQLEEALETLKTEREQKNNLRKELSHYMSINDSFYTSHLQVSLDGLKFSDDTVTAEPNNDAEALVNGFEHSGLVKSSLDNKTSTPRKDGLAPPSPSLVSDLLSELHISEIQKLKQQLVQMEREKVGLLATLQDTQKQLEQARGTLSEQHEKVNRLTENLSALRRLQAGKERQTSLDNEKDRDSHEDGDYYEVDINGPEILACKYHVAVAEAGELREQLKALRSTHEAREAQHAEEKGRYEAEGQALTEKISLLEKASHQDRELLAHLEKELKKVSDVAGETQGSLNVAQDELVTFSEELANLYHHVCMCNNETPNRVMLDYYREGQGKAGRTSPEGRGRRSPVLLPKGLLATEVGRADGGTGDNSPSPSSSLPSPLSDPRREPMNIYNLIAIIRDQIKHLQAAVDRTTELSRQRIASQELGPAVDKDKEALMEEILKLKSLLSTKREQITTLRTVLKANKQTAEVALANLKSKYENEKAMVTETMMKLRNELKALKEDAATFSSLRAMFATRCDEYITQLDEMQRQLAAAEDEKKTLNSLLRMAIQQKLALTQRLELLELDHEQTRRGRSKAASKAKPASPSL.

Position 2 is an N-acetylserine (Ser2). A coiled-coil region spans residues 20–270; the sequence is EWLRAEVKRL…LSHYMSINDS (251 aa). Positions 25–400 are interaction with DYNLL1, DYNC1H1, DYNC1I2, DCTN1 and DCTN2; it reads EVKRLSHELA…RLTENLSALR (376 aa). Ser190, Ser224, and Ser320 each carry phosphoserine. The tract at residues 313–332 is disordered; sequence SSLDNKTSTPRKDGLAPPSP. Thr321 carries the post-translational modification Phosphothreonine. Residues 336–595 form an interaction with KIF5A region; that stretch reads SDLLSELHIS…LLATEVGRAD (260 aa). Positions 340–539 form a coiled coil; that stretch reads SELHISEIQK…VTFSEELANL (200 aa). A phosphoserine mark is found at Ser345 and Ser397. Disordered stretches follow at residues 400 to 427, 563 to 582, 591 to 618, and 799 to 820; these read RRLQAGKERQTSLDNEKDRDSHEDGDYY, QGKAGRTSPEGRGRRSPVLL, VGRADGGTGDNSPSPSSSLPSPLSDPRR, and HEQTRRGRSKAASKAKPASPSL. Over residues 404-424 the composition is skewed to basic and acidic residues; it reads AGKERQTSLDNEKDRDSHEDG. Ser570 and Ser578 each carry phosphoserine. Positions 586–820 are interaction with RANBP2; that stretch reads LLATEVGRAD…SKAKPASPSL (235 aa). Thr598 is subject to Phosphothreonine. The segment covering 602-614 has biased composition (low complexity); that stretch reads SPSPSSSLPSPLS. The stretch at 662–804 forms a coiled coil; the sequence is DKDKEALMEE…LELDHEQTRR (143 aa). Residues 662-810 form an interaction with RAB6A region; the sequence is DKDKEALMEE…QTRRGRSKAA (149 aa). Ser819 is modified (phosphoserine).

Belongs to the BicD family. Part of a tripartite complex with dynein and dynactin, acts an adapter linking the dynein motor complex and dynactin. Interacts with CPNE4 (via VWFA domain). Interacts with NEK9. Interacts with DCTN2. Interacts with RAB6A. Interacts with DNAI1. Interacts with DYNLL1, DYNC1H1, DYNC1I2 and DCTN1. Forms a complex with dynein and dynactin. The dynein-dynactin-BICD2 ternary complex (DDB) binds preferentially to tyrosinated microtubules than to detyrosinated microtubules. Interacts with RANBP2, RAB6A and KIF5A. Interacts with KIF1C. In terms of processing, phosphorylated by NEK9 in vitro. Ubiquitously expressed with high expression in the spinal cord.

It localises to the golgi apparatus. The protein localises to the cytoplasm. The protein resides in the cytoskeleton. It is found in the nucleus. Its subcellular location is the nuclear pore complex. It localises to the nucleus envelope. Functionally, acts as an adapter protein linking the dynein motor complex to various cargos and converts dynein from a non-processive to a highly processive motor in the presence of dynactin. Facilitates and stabilizes the interaction between dynein and dynactin and activates dynein processivity (the ability to move along a microtubule for a long distance without falling off the track). Facilitates the binding of RAB6A to the Golgi by stabilizing its GTP-bound form. Regulates coat complex coatomer protein I (COPI)-independent Golgi-endoplasmic reticulum transport via its interaction with RAB6A and recruitment of the dynein-dynactin motor complex. Contributes to nuclear and centrosomal positioning prior to mitotic entry through regulation of both dynein and kinesin-1. During G2 phase of the cell cycle, associates with RANBP2 at the nuclear pores and recruits dynein and dynactin to the nuclear envelope to ensure proper positioning of the nucleus relative to centrosomes prior to the onset of mitosis. This is Protein bicaudal D homolog 2 (Bicd2) from Mus musculus (Mouse).